A 154-amino-acid chain; its full sequence is 6,7-dimethyl-8-ribityllumazine synthase (154 aa).

5-amino-6-(D-ribitylamino)uracil contacts are provided by residues Phe-21, Ala-55–Glu-57, and Cys-79–Ile-81. Residue Ala-84–Thr-85 coordinates (2S)-2-hydroxy-3-oxobutyl phosphate. His-87 functions as the Proton donor in the catalytic mechanism. Residue Phe-111 participates in 5-amino-6-(D-ribitylamino)uracil binding. Position 125 (Arg-125) interacts with (2S)-2-hydroxy-3-oxobutyl phosphate.

It belongs to the DMRL synthase family. As to quaternary structure, forms an icosahedral capsid composed of 60 subunits, arranged as a dodecamer of pentamers.

The enzyme catalyses (2S)-2-hydroxy-3-oxobutyl phosphate + 5-amino-6-(D-ribitylamino)uracil = 6,7-dimethyl-8-(1-D-ribityl)lumazine + phosphate + 2 H2O + H(+). Its pathway is cofactor biosynthesis; riboflavin biosynthesis; riboflavin from 2-hydroxy-3-oxobutyl phosphate and 5-amino-6-(D-ribitylamino)uracil: step 1/2. Catalyzes the formation of 6,7-dimethyl-8-ribityllumazine by condensation of 5-amino-6-(D-ribitylamino)uracil with 3,4-dihydroxy-2-butanone 4-phosphate. This is the penultimate step in the biosynthesis of riboflavin. The chain is 6,7-dimethyl-8-ribityllumazine synthase from Macrococcus caseolyticus (strain JCSC5402) (Macrococcoides caseolyticum).